The sequence spans 466 residues: Communesin N16 acyltransferase cnsK (466 aa).

Belongs to the fumigaclavine B O-acetyltransferase family.

It functions in the pathway alkaloid biosynthesis. Functionally, communesin N16 acyltransferase; part of the gene cluster that mediates the biosynthesis of communesins, a prominent class of indole alkaloids with great potential as pharmaceuticals. Communesins are biosynthesized by the coupling of tryptamine and aurantioclavine, two building blocks derived from L-tryptophan. The L-tryptophan decarboxylase cnsB converts L-tryptophan to tryptamine, whereas the tryptophan dimethylallyltransferase cnsF converts L-tryptophan to 4-dimethylallyl tryptophan which is further transformed to aurantioclavine by the aurantioclavine synthase cnsA, probably aided by the catalase cnsD. The cytochrome P450 monooxygenase cnsC catalyzes the heterodimeric coupling between the two different indole moieties, tryptamine and aurantioclavine, to construct vicinal quaternary stereocenters and yield the heptacyclic communesin scaffold. The O-methyltransferase cnsE then methylates the communesin scaffold to produce communesin K, the simplest characterized communesin that contains the heptacyclic core. The dioxygenase cnsJ converts communesin K into communesin I. Acylation to introduce the hexadienyl group at position N16 of communesin I by the acyltransferase cnsK leads to the production of communesin B. The hexadienyl group is produced by the highly reducing polyketide synthase cnsI, before being hydrolytically removed from cnsI by the serine hydrolase cnsH, converted into hexadienyl-CoA by the CoA ligase cnsG, and then transferred to communesin I by cnsK. Surprisingly, cnsK may also be a promiscuous acyltransferase that can tolerate a range of acyl groups, including acetyl-, propionyl-, and butyryl-CoA, which lead to communesins A, G and H respectively. The roles of the alpha-ketoglutarate-dependent dioxygenases cnsM and cnsP have still to be determined. The protein is Communesin N16 acyltransferase cnsK of Penicillium expansum (Blue mold rot fungus).